Reading from the N-terminus, the 240-residue chain is Putative N-acetylmannosamine-6-phosphate 2-epimerase (240 aa).

Belongs to the NanE family.

The catalysed reaction is an N-acyl-D-glucosamine 6-phosphate = an N-acyl-D-mannosamine 6-phosphate. It functions in the pathway amino-sugar metabolism; N-acetylneuraminate degradation; D-fructose 6-phosphate from N-acetylneuraminate: step 3/5. Converts N-acetylmannosamine-6-phosphate (ManNAc-6-P) to N-acetylglucosamine-6-phosphate (GlcNAc-6-P). In Vibrio cholerae serotype O1 (strain ATCC 39315 / El Tor Inaba N16961), this protein is Putative N-acetylmannosamine-6-phosphate 2-epimerase.